A 180-amino-acid polypeptide reads, in one-letter code: MTQISGSPDVPDLGRRQFMNLLTFGTITGVAAGALYPAVKYLIPPSSGGSGGGVTAKDALGNDVKVTEFLASHNAGDRVLAQGLKGDPTYIVVQGDDTIANYGINAVCTHLGCVVPWNASENKFMCPCHGSQYNAEGKVVRGPAPLSLALAHATVTDDDKLVLSTWTETDFRTDEDPWWA.

A helical transmembrane segment spans residues 21-43 (LLTFGTITGVAAGALYPAVKYLI). In terms of domain architecture, Rieske spans 66-162 (VTEFLASHNA…ATVTDDDKLV (97 aa)). The [2Fe-2S] cluster site is built by Cys108, His110, Cys126, and His129. A disulfide bridge connects residues Cys113 and Cys128.

Belongs to the Rieske iron-sulfur protein family. The 4 large subunits of the cytochrome b6-f complex are cytochrome b6, subunit IV (17 kDa polypeptide, PetD), cytochrome f and the Rieske protein, while the 4 small subunits are PetG, PetL, PetM and PetN. The complex functions as a dimer. It depends on [2Fe-2S] cluster as a cofactor.

Its subcellular location is the cellular thylakoid membrane. It catalyses the reaction 2 oxidized [plastocyanin] + a plastoquinol + 2 H(+)(in) = 2 reduced [plastocyanin] + a plastoquinone + 4 H(+)(out). Functionally, component of the cytochrome b6-f complex, which mediates electron transfer between photosystem II (PSII) and photosystem I (PSI), cyclic electron flow around PSI, and state transitions. The protein is Cytochrome b6-f complex iron-sulfur subunit 2 of Synechocystis sp. (strain ATCC 27184 / PCC 6803 / Kazusa).